The following is a 567-amino-acid chain: Probable E3 ubiquitin-protein ligase ARI8 (567 aa).

Residues 1–27 are disordered; the sequence is MEADDDFYSGTENYSDYADSDEDDADG. Acidic residues predominate over residues 18–27; the sequence is ADSDEDDADG. Residues 124–337 are TRIAD supradomain; sequence GELDCGICFE…GGFYACNRYE (214 aa). Zn(2+)-binding residues include C128, C131, C145, H147, C150, C153, C173, C178, C217, C222, C239, C241, C246, C249, H254, C259, C286, and C289. Residues 128 to 178 form an RING-type 1 zinc finger; the sequence is CGICFETFLSDKLHAAACGHPFCDSCWEGYITTAINDGPGCLTLRCPDPSC. The IBR-type zinc finger occupies 197–259; the sequence is QKYTSYFVRS…AEEAHRPVDC (63 aa). An RING-type 2; atypical zinc finger spans residues 286–316; that stretch reads CPKCKRPIEKNQGCMHITCTPPCKFEFCWLC. C299 is an active-site residue. Residues C304, C308, C313, C316, H323, and C333 each coordinate Zn(2+). Residues 514 to 543 are disordered; sequence DAYDRTSSSKSLGGKTKGSSSKASSSDSSH. The span at 521–542 shows a compositional bias: low complexity; the sequence is SSKSLGGKTKGSSSKASSSDSS. Residues 540–567 form a RanBP2-type zinc finger; sequence DSSHWPCEYCTYVNPRSTTICQMCEHGR.

Belongs to the RBR family. Ariadne subfamily. Zn(2+) serves as cofactor. Ubiquitous.

The enzyme catalyses [E2 ubiquitin-conjugating enzyme]-S-ubiquitinyl-L-cysteine + [acceptor protein]-L-lysine = [E2 ubiquitin-conjugating enzyme]-L-cysteine + [acceptor protein]-N(6)-ubiquitinyl-L-lysine.. Its pathway is protein modification; protein ubiquitination. Functionally, might act as an E3 ubiquitin-protein ligase, or as part of E3 complex, which accepts ubiquitin from specific E2 ubiquitin-conjugating enzymes and then transfers it to substrates. The polypeptide is Probable E3 ubiquitin-protein ligase ARI8 (ARI8) (Arabidopsis thaliana (Mouse-ear cress)).